The primary structure comprises 458 residues: UPF0210 protein MMP1427 (458 aa).

This sequence belongs to the UPF0210 family.

This Methanococcus maripaludis (strain DSM 14266 / JCM 13030 / NBRC 101832 / S2 / LL) protein is UPF0210 protein MMP1427.